The following is a 343-amino-acid chain: MLQTDNLTAAQPQRIVAAQTASAQEELLERALRPKTLDDYIGQHKAKEQLAIFIQAAKKRGEALDHVLLFGPPGLGKTTLAHIIAKELGVNLRQTSGPVLERAGDLAALLTNLDPHDVLFIDEIHRLSPVVEEILYPALEDYRLDIMIGEGPAARSVKIDLPPFTLVGATTRAGMLTNPLRDRFGIVSRLEFYENRDLTTIVSRSAQLLQLDMGEEGAMEVAKRSRGTPRIANRLLRRVRDFADVKNNGVIDAAVADAALSMLDVDAQGLDVMDRKFLEAVLHKFGGGPVGLDNVAAAIGESTDTIEDVIEPYLIQQGFLQRTPRGRMATERAYLHFGLPVEK.

The tract at residues 4 to 193 (TDNLTAAQPQ…FGIVSRLEFY (190 aa)) is large ATPase domain (RuvB-L). Residues Leu32, Arg33, Gly74, Lys77, Thr78, Thr79, 140 to 142 (EDY), Arg183, Tyr193, and Arg230 each bind ATP. A Mg(2+)-binding site is contributed by Thr78. Residues 194–264 (ENRDLTTIVS…VADAALSMLD (71 aa)) are small ATPAse domain (RuvB-S). The tract at residues 267–343 (AQGLDVMDRK…YLHFGLPVEK (77 aa)) is head domain (RuvB-H). The DNA site is built by Arg322 and Arg327.

The protein belongs to the RuvB family. As to quaternary structure, homohexamer. Forms an RuvA(8)-RuvB(12)-Holliday junction (HJ) complex. HJ DNA is sandwiched between 2 RuvA tetramers; dsDNA enters through RuvA and exits via RuvB. An RuvB hexamer assembles on each DNA strand where it exits the tetramer. Each RuvB hexamer is contacted by two RuvA subunits (via domain III) on 2 adjacent RuvB subunits; this complex drives branch migration. In the full resolvosome a probable DNA-RuvA(4)-RuvB(12)-RuvC(2) complex forms which resolves the HJ.

The protein resides in the cytoplasm. The catalysed reaction is ATP + H2O = ADP + phosphate + H(+). Its function is as follows. The RuvA-RuvB-RuvC complex processes Holliday junction (HJ) DNA during genetic recombination and DNA repair, while the RuvA-RuvB complex plays an important role in the rescue of blocked DNA replication forks via replication fork reversal (RFR). RuvA specifically binds to HJ cruciform DNA, conferring on it an open structure. The RuvB hexamer acts as an ATP-dependent pump, pulling dsDNA into and through the RuvAB complex. RuvB forms 2 homohexamers on either side of HJ DNA bound by 1 or 2 RuvA tetramers; 4 subunits per hexamer contact DNA at a time. Coordinated motions by a converter formed by DNA-disengaged RuvB subunits stimulates ATP hydrolysis and nucleotide exchange. Immobilization of the converter enables RuvB to convert the ATP-contained energy into a lever motion, pulling 2 nucleotides of DNA out of the RuvA tetramer per ATP hydrolyzed, thus driving DNA branch migration. The RuvB motors rotate together with the DNA substrate, which together with the progressing nucleotide cycle form the mechanistic basis for DNA recombination by continuous HJ branch migration. Branch migration allows RuvC to scan DNA until it finds its consensus sequence, where it cleaves and resolves cruciform DNA. In Neisseria gonorrhoeae (strain NCCP11945), this protein is Holliday junction branch migration complex subunit RuvB.